A 109-amino-acid chain; its full sequence is Large ribosomal subunit protein uL22 (109 aa).

This sequence belongs to the universal ribosomal protein uL22 family. Part of the 50S ribosomal subunit.

In terms of biological role, this protein binds specifically to 23S rRNA; its binding is stimulated by other ribosomal proteins, e.g. L4, L17, and L20. It is important during the early stages of 50S assembly. It makes multiple contacts with different domains of the 23S rRNA in the assembled 50S subunit and ribosome. Its function is as follows. The globular domain of the protein is located near the polypeptide exit tunnel on the outside of the subunit, while an extended beta-hairpin is found that lines the wall of the exit tunnel in the center of the 70S ribosome. In Methylibium petroleiphilum (strain ATCC BAA-1232 / LMG 22953 / PM1), this protein is Large ribosomal subunit protein uL22.